The primary structure comprises 148 residues: Deoxyuridine 5'-triphosphate nucleotidohydrolase (148 aa).

Substrate is bound by residues 67–69, Asn80, 84–86, and Met94; these read RSG and LID.

The protein belongs to the dUTPase family. Mg(2+) serves as cofactor.

It carries out the reaction dUTP + H2O = dUMP + diphosphate + H(+). Its pathway is pyrimidine metabolism; dUMP biosynthesis; dUMP from dCTP (dUTP route): step 2/2. This enzyme is involved in nucleotide metabolism: it produces dUMP, the immediate precursor of thymidine nucleotides and it decreases the intracellular concentration of dUTP so that uracil cannot be incorporated into DNA. In Burkholderia mallei (strain NCTC 10247), this protein is Deoxyuridine 5'-triphosphate nucleotidohydrolase.